The primary structure comprises 276 residues: MASTASLRVAPQADTYAAYQTPLAVRQACRSGALTGPTAGMAPGYVQGNLAVLPKELAEEFLRFCHFNPRPCPVIGMSEPGSFKVPVLGEDLDIRTDFPGYRVWQDGEVIADTADVTDYWRDDLVAFVIGCSLSFEEALMAEGLPLRHVDRNVRVPMFRTTVQCVPAGRFSGRMVMSMRPLVPAHAIRAIQITTRFPQVHGAPLHVGLPELIGVKDLMKPDYGDAVEVLDNELPVFWACGVTPQSVIAEAKPSFAITHAPGCMLVTDRRNTEFAIL.

The protein belongs to the D-glutamate cyclase family.

This chain is Putative hydro-lyase Xaut_1503, found in Xanthobacter autotrophicus (strain ATCC BAA-1158 / Py2).